A 285-amino-acid chain; its full sequence is Ret finger protein-like 4A (285 aa).

Residues 11–53 (CYFCFRYLENPVYLNCGYICCFQCLDSLEKSPEGDGVLCPNCS) form an RING-type; degenerate zinc finger. Residues 78–276 (EPQLNFILTM…ISICPVMNPS (199 aa)) form the B30.2/SPRY domain.

As to quaternary structure, interacts with PSMB1, UBE2A and CCNB1.

It is found in the cytoplasm. The protein resides in the nucleus. The polypeptide is Ret finger protein-like 4A (Rfpl4a) (Rattus norvegicus (Rat)).